Reading from the N-terminus, the 178-residue chain is ATP synthase subunit delta (178 aa).

This sequence belongs to the ATPase delta chain family. In terms of assembly, F-type ATPases have 2 components, F(1) - the catalytic core - and F(0) - the membrane proton channel. F(1) has five subunits: alpha(3), beta(3), gamma(1), delta(1), epsilon(1). F(0) has three main subunits: a(1), b(2) and c(10-14). The alpha and beta chains form an alternating ring which encloses part of the gamma chain. F(1) is attached to F(0) by a central stalk formed by the gamma and epsilon chains, while a peripheral stalk is formed by the delta and b chains.

The protein resides in the cell inner membrane. Its function is as follows. F(1)F(0) ATP synthase produces ATP from ADP in the presence of a proton or sodium gradient. F-type ATPases consist of two structural domains, F(1) containing the extramembraneous catalytic core and F(0) containing the membrane proton channel, linked together by a central stalk and a peripheral stalk. During catalysis, ATP synthesis in the catalytic domain of F(1) is coupled via a rotary mechanism of the central stalk subunits to proton translocation. In terms of biological role, this protein is part of the stalk that links CF(0) to CF(1). It either transmits conformational changes from CF(0) to CF(1) or is implicated in proton conduction. In Pelodictyon phaeoclathratiforme (strain DSM 5477 / BU-1), this protein is ATP synthase subunit delta.